A 453-amino-acid chain; its full sequence is Chromosomal replication initiator protein DnaA (453 aa).

Residues 1-74 (MKEKQFWNRI…GFEIYDAEIT (74 aa)) form a domain I, interacts with DnaA modulators region. A domain II region spans residues 74–113 (TPHYIFTKPQDTTSSQVEEATNLTLYDYSPKLVSIPYSDT). Positions 114-331 (GLKEKYTFDN…GAINDITLIA (218 aa)) are domain III, AAA+ region. 4 residues coordinate ATP: Gly-158, Gly-160, Lys-161, and Thr-162. The interval 332–453 (RVKKIKDITI…EIESIKKKIK (122 aa)) is domain IV, binds dsDNA.

Belongs to the DnaA family. Oligomerizes as a right-handed, spiral filament on DNA at oriC.

The protein resides in the cytoplasm. Functionally, plays an essential role in the initiation and regulation of chromosomal replication. ATP-DnaA binds to the origin of replication (oriC) to initiate formation of the DNA replication initiation complex once per cell cycle. Binds the DnaA box (a 9 base pair repeat at the origin) and separates the double-stranded (ds)DNA. Forms a right-handed helical filament on oriC DNA; dsDNA binds to the exterior of the filament while single-stranded (ss)DNA is stabiized in the filament's interior. The ATP-DnaA-oriC complex binds and stabilizes one strand of the AT-rich DNA unwinding element (DUE), permitting loading of DNA polymerase. After initiation quickly degrades to an ADP-DnaA complex that is not apt for DNA replication. Binds acidic phospholipids. The chain is Chromosomal replication initiator protein DnaA from Streptococcus pneumoniae (strain P1031).